Reading from the N-terminus, the 243-residue chain is Triosephosphate isomerase (243 aa).

A substrate-binding site is contributed by 9 to 11; it reads NWK. H96 serves as the catalytic Electrophile. E165 (proton acceptor) is an active-site residue. Substrate contacts are provided by residues G171, S204, and 225–226; that span reads GG.

Belongs to the triosephosphate isomerase family. Homodimer.

It localises to the cytoplasm. It carries out the reaction D-glyceraldehyde 3-phosphate = dihydroxyacetone phosphate. It participates in carbohydrate biosynthesis; gluconeogenesis. Its pathway is carbohydrate degradation; glycolysis; D-glyceraldehyde 3-phosphate from glycerone phosphate: step 1/1. Its function is as follows. Involved in the gluconeogenesis. Catalyzes stereospecifically the conversion of dihydroxyacetone phosphate (DHAP) to D-glyceraldehyde-3-phosphate (G3P). The sequence is that of Triosephosphate isomerase from Prochlorococcus marinus (strain MIT 9313).